A 133-amino-acid chain; its full sequence is p53 and DNA damage-regulated protein 1 (133 aa).

It belongs to the prefoldin subunit beta family. Component of the PAQosome complex which is responsible for the biogenesis of several protein complexes and which consists of R2TP complex members RUVBL1, RUVBL2, RPAP3 and PIH1D1, URI complex members PFDN2, PFDN6, PDRG1, UXT and URI1 as well as ASDURF, POLR2E and DNAAF10/WDR92. In terms of tissue distribution, predominantly expressed in normal testis and exhibits reduced but detectable expression in other organs.

It is found in the cytoplasm. In terms of biological role, may play a role in chaperone-mediated protein folding. The chain is p53 and DNA damage-regulated protein 1 (PDRG1) from Homo sapiens (Human).